The chain runs to 220 residues: Protein myomaker (220 aa).

Residue M1 is a topological domain, extracellular. A helical transmembrane segment spans residues 2-22 (GAFIAKMLLPTISSLVFVPAA). Over 23-37 (SVAAKRGFHMEAMVY) the chain is Cytoplasmic. The chain crosses the membrane as a helical span at residues 38-58 (FFTMFFTAIYHACDGPGLSIL). Residues 59–64 (CFMKYD) are Extracellular-facing. The chain crosses the membrane as a helical span at residues 65 to 85 (ILEYFSVYGTAISMWVTLLAL). Topologically, residues 86-93 (GDFDEPKR) are cytoplasmic. A helical membrane pass occupies residues 94 to 110 (SSLTMFGVLTAAVRIYQ). The Extracellular portion of the chain corresponds to 111–112 (DR). Residues 113-133 (LGYGIYSGPIGTAVFMITVKW) traverse the membrane as a helical segment. Over 134-153 (LQKMKEKKGLYPDKSVYTQQ) the chain is Cytoplasmic. A helical transmembrane segment spans residues 154–174 (VGPGCCFGALALMLRFYFEEW). D175 is a topological domain (extracellular). Residues 176 to 196 (YAYVHSFYHVSLAMSFILLLP) traverse the membrane as a helical segment. At 197–220 (KKNRYAGTGRNAAKLNCYTLCCCV) the chain is on the cytoplasmic side.

The protein belongs to the TMEM8 family.

It localises to the cell membrane. Functionally, myoblast-specific protein that mediates myoblast fusion, an essential step for the formation of multi-nucleated muscle fibers. Actively participates in the membrane fusion reaction by mediating the mixing of cell membrane lipids (hemifusion) upstream of mymx. In Danio rerio (Zebrafish), this protein is Protein myomaker.